The primary structure comprises 863 residues: Scm-like with four MBT domains protein 1 (863 aa).

4 MBT repeats span residues 20–120, 128–232, 242–346, and 354–451; these read FSWE…LEAP, SDWS…LQPP, ADWQ…INPP, and FDWA…LSTP. The disordered stretch occupies residues 638-773; that stretch reads KKKNKRIGRP…SDGENKPPSP (136 aa). Over residues 660-679 the composition is skewed to basic residues; sequence KTSKRRKRRKNIFVHKKKRS. Residues 680–691 are compositionally biased toward polar residues; sequence SASVDNTPVGSP. The segment covering 696 to 710 has biased composition (acidic residues); the sequence is GEDEDDADDGDDDSL. Residues Ser-764 and Ser-772 each carry the phosphoserine modification. Residues 793–861 enclose the SAM domain; the sequence is WSVADVVRFI…RIKFAFYEQF (69 aa).

In terms of assembly, interacts with MYOD1. Component of the SLC (SFMBT1-LSD1-CoREST) corepressor complex, which also contains KDM1A/LSD1 and RCOR1/CoREST. Interacts with KDM1A/LSD1 and RCOR1/CoREST. Interacts with MYOD1. Interacts with L3MBTL3. In terms of tissue distribution, highly expressed in the testis, low expression was detected in brain, kidney, heart and lung.

It localises to the nucleus. Histone-binding protein, which is part of various corepressor complexes. Mediates the recruitment of corepressor complexes to target genes, followed by chromatin compaction and repression of transcription. Plays a role during myogenesis: required for the maintenance of undifferentiated states of myogenic progenitor cells via interaction with MYOD1. Interaction with MYOD1 leads to the recruitment of associated corepressors and silencing of MYOD1 target genes. Part of the SLC complex in germ cells, where it may play a role during spermatogenesis. This is Scm-like with four MBT domains protein 1 (Sfmbt1) from Rattus norvegicus (Rat).